A 507-amino-acid polypeptide reads, in one-letter code: E3 ubiquitin-protein ligase TRIM31 (507 aa).

Residues 16–56 (CPICMEILQDPVTIDCGHNFCLQCISQVGKTSEKIQCPLCK) form an RING-type zinc finger. A B box-type zinc finger spans residues 89–130 (KEDSRCQRHKEKLHYFCEQDGAFLCVVCRDSKDHKSHNVTLI). Residues Cys94, His97, Cys116, and His122 each coordinate Zn(2+). Coiled coils occupy residues 176–241 (EKLK…LQSS) and 269–298 (EDLE…DMNA). The region spanning 315–507 (EKESWSLLQK…VACSHITLSP (193 aa)) is the B30.2/SPRY domain.

Belongs to the TRIM/RBCC family. In terms of assembly, may form oligomers. Interacts with isoform p52shc of SHC1. Post-translationally, auto-ubiquitinated (in vitro). In terms of tissue distribution, highly expressed in the gastrointestrinal tract, with high expression in the small intestine, moderate in the large intestine and weak in the stomach and esophagus.

It localises to the cytoplasm. The protein localises to the mitochondrion. It carries out the reaction S-ubiquitinyl-[E2 ubiquitin-conjugating enzyme]-L-cysteine + [acceptor protein]-L-lysine = [E2 ubiquitin-conjugating enzyme]-L-cysteine + N(6)-ubiquitinyl-[acceptor protein]-L-lysine.. The protein operates within protein modification; protein ubiquitination. E3 ubiquitin-protein ligase that acts as a regulator of antiviral immune response and inflammation by mediating ubiquitination of substrates. Acts as a regulator of innate immune defense against viruses by mediating 'Lys-63'-linked ubiquitination of MAVS, promoting MAVS polymerization and formation of three-stranded helical filaments on mitochondria. Acts as a negative regulator of the NLRP3 inflammasome by catalyzing 'Lys-48'-linked ubiquitination of NLRP3, leading to its degradation. Regulator of Src-induced anchorage independent cell growth. The protein is E3 ubiquitin-protein ligase TRIM31 of Mus musculus (Mouse).